A 139-amino-acid chain; its full sequence is Large ribosomal subunit protein uL16 (139 aa).

Over residues 1–17 (MLMPKRVKYRKTQRGRM) the composition is skewed to basic residues. The tract at residues 1–24 (MLMPKRVKYRKTQRGRMKGNSGRG) is disordered.

The protein belongs to the universal ribosomal protein uL16 family. As to quaternary structure, part of the 50S ribosomal subunit.

Binds 23S rRNA and is also seen to make contacts with the A and possibly P site tRNAs. The sequence is that of Large ribosomal subunit protein uL16 from Pelodictyon phaeoclathratiforme (strain DSM 5477 / BU-1).